A 136-amino-acid polypeptide reads, in one-letter code: Late embryogenesis abundant protein D-7 (136 aa).

Disordered regions lie at residues 1 to 108 and 117 to 136; these read MASH…AQGA and GMADADEDEHNYPATVTRKD. The segment covering 11-58 has biased composition (basic and acidic residues); it reads GRAEGRAHEKGEQMKESMKEKAEAAKQKTMETAEAAKQKTMETAEAAK. LEA 11-mer repeat repeat units follow at residues 31–41, 42–52, 53–63, 64–74, and 75–85; these read KAEAAKQKTME, TAEAAKQKTME, TAEAAKQKTRG, AAETTNDKTKQ, and TAGAARGKAEE.

This sequence belongs to the LEA type 4 family.

Its function is as follows. LEA proteins are late embryonic proteins abundant in higher plant seed embryos. There are two subsets of LEA proteins (5a and 5b), the first ones are expressed when the cotyledon weight reach 80 mg and the second set are expressed above 100 mg. The function of those proteins is not known. This is Late embryogenesis abundant protein D-7 from Gossypium hirsutum (Upland cotton).